A 500-amino-acid chain; its full sequence is NAD(P)H-quinone oxidoreductase chain 4, chloroplastic (500 aa).

The next 14 helical transmembrane spans lie at F4–L24, L31–F51, I87–V107, L113–S130, L134–M154, F167–L187, A208–I228, H242–V262, A272–A292, I305–D325, G330–G350, L386–T406, I416–M436, and L462–V482.

This sequence belongs to the complex I subunit 4 family.

It localises to the plastid. The protein resides in the chloroplast thylakoid membrane. The enzyme catalyses a plastoquinone + NADH + (n+1) H(+)(in) = a plastoquinol + NAD(+) + n H(+)(out). It carries out the reaction a plastoquinone + NADPH + (n+1) H(+)(in) = a plastoquinol + NADP(+) + n H(+)(out). The sequence is that of NAD(P)H-quinone oxidoreductase chain 4, chloroplastic from Gossypium barbadense (Sea Island cotton).